The sequence spans 572 residues: Phenylalanine--tRNA ligase beta subunit (572 aa).

Positions 278–353 (LTPKEFEVEF…IAYGYNEIKP (76 aa)) constitute a B5 domain. Mg(2+)-binding residues include Asp-331, Asp-337, Glu-340, and Asp-341.

It belongs to the phenylalanyl-tRNA synthetase beta subunit family. Type 2 subfamily. As to quaternary structure, tetramer of two alpha and two beta subunits. The cofactor is Mg(2+).

It is found in the cytoplasm. It carries out the reaction tRNA(Phe) + L-phenylalanine + ATP = L-phenylalanyl-tRNA(Phe) + AMP + diphosphate + H(+). This is Phenylalanine--tRNA ligase beta subunit from Thermococcus onnurineus (strain NA1).